The following is a 263-amino-acid chain: 7beta-hydroxysteroid dehydrogenase (263 aa).

Residues 17–21 (TEGVG), 40–41 (RR), and 66–67 (DF) each bind NADP(+). Y156 functions as the Proton acceptor in the catalytic mechanism. S240 contacts NADP(+).

The protein belongs to the short-chain dehydrogenases/reductases (SDR) family.

It carries out the reaction a 7beta-hydroxysteroid + NADP(+) = a 7-oxosteroid + NADPH + H(+). It catalyses the reaction 7-oxolithocholate + NADPH + H(+) = ursodeoxycholate + NADP(+). Functionally, 7beta-hydroxysteroid dehydrogenase that catalyzes the reduction of the 7-oxo group of 7-oxo-lithocholate (7-oxo-LCA), to yield ursodeoxycholate (UDCA). As R.gnavus is a common core bacterium of the human gut microbiota, this enzyme contributes to the formation of UDCA in the human colon. UDCA is regarded as a chemopreventive beneficial secondary bile acid due to its low hydrophobicity; it protects hepatocytes and bile duct epithelial cells against necrosis and apoptosis induced by more hydrophobic secondary bile acids like deoxycholate (DCA). This enzyme is also able to catalyze the reverse reaction in vitro, i.e. the oxidation of the 7beta-hydroxy group of UDCA to 7-oxo-LCA, but much less efficiently than the reduction reaction. The chain is 7beta-hydroxysteroid dehydrogenase from Mediterraneibacter gnavus (strain ATCC 29149 / DSM 114966 / JCM 6515 / VPI C7-9) (Ruminococcus gnavus).